Consider the following 238-residue polypeptide: Segregation and condensation protein A (238 aa).

This sequence belongs to the ScpA family. Component of a cohesin-like complex composed of ScpA, ScpB and the Smc homodimer, in which ScpA and ScpB bind to the head domain of Smc. The presence of the three proteins is required for the association of the complex with DNA.

It is found in the cytoplasm. Participates in chromosomal partition during cell division. May act via the formation of a condensin-like complex containing Smc and ScpB that pull DNA away from mid-cell into both cell halves. The sequence is that of Segregation and condensation protein A from Macrococcus caseolyticus (strain JCSC5402) (Macrococcoides caseolyticum).